The sequence spans 381 residues: MINMRKTHPLMKIINHSFIDLPTPSNISAWWNFGSLLGMCLIIQILTGLFLAMHYTSDTLTAFSSVAHICRDVNHGWLLRNLHANGASMFFMCLFLHVGRGIYYGSYLYKETWNIGVILLLTVMATAFVGYVLPWGQMSFWGATVITNLLSAIPYIGTTLAEWIWGGFAVDKATLTRFFAFHFILPFIIMALAVVHLLFLHETGSNNPSGINPDSDKIPFHPYYTIKDALGFMLLLLVLLLLALFSPDLLGDPDNFSPANPLNTPPHIKPEWYFLFAYAILRSIPNKLGGVLAVLASILILLIIPLLHTANQRSMMFRPVSQTLFWILTANLITLTWIGGHPVEQPFIIIGQLAPMPYFLLILVMMPLAGLFENYMLKPEW.

The next 4 helical transmembrane spans lie at 33 to 53 (FGSL…FLAM), 77 to 98 (WLLR…FLHV), 113 to 133 (WNIG…GYVL), and 178 to 198 (FFAF…VHLL). Heme b-binding residues include histidine 83 and histidine 97. Positions 182 and 196 each coordinate heme b. Histidine 201 provides a ligand contact to a ubiquinone. A run of 4 helical transmembrane segments spans residues 226–246 (IKDA…ALFS), 288–308 (LGGV…PLLH), 320–340 (VSQT…WIGG), and 347–367 (FIII…VMMP).

It belongs to the cytochrome b family. As to quaternary structure, the cytochrome bc1 complex contains 11 subunits: 3 respiratory subunits (MT-CYB, CYC1 and UQCRFS1), 2 core proteins (UQCRC1 and UQCRC2) and 6 low-molecular weight proteins (UQCRH/QCR6, UQCRB/QCR7, UQCRQ/QCR8, UQCR10/QCR9, UQCR11/QCR10 and a cleavage product of UQCRFS1). This cytochrome bc1 complex then forms a dimer. Heme b is required as a cofactor.

It is found in the mitochondrion inner membrane. In terms of biological role, component of the ubiquinol-cytochrome c reductase complex (complex III or cytochrome b-c1 complex) that is part of the mitochondrial respiratory chain. The b-c1 complex mediates electron transfer from ubiquinol to cytochrome c. Contributes to the generation of a proton gradient across the mitochondrial membrane that is then used for ATP synthesis. This Dasyurus hallucatus (Northern quoll) protein is Cytochrome b (MT-CYB).